The sequence spans 334 residues: D-alanine--D-alanine ligase (334 aa).

In terms of domain architecture, ATP-grasp spans 110-306; that stretch reads KHVLKSLGID…FDHVVDLIVQ (197 aa). 138–190 provides a ligand contact to ATP; the sequence is LPYPFVIKPVRGGSTIGVHAIFSKSEYLDLSAHADTLEDRMIVEEYVSGQEVQ. Mg(2+) contacts are provided by Asp258, Glu272, and Asn274.

It belongs to the D-alanine--D-alanine ligase family. The cofactor is Mg(2+). Requires Mn(2+) as cofactor.

It localises to the cytoplasm. It catalyses the reaction 2 D-alanine + ATP = D-alanyl-D-alanine + ADP + phosphate + H(+). Its pathway is cell wall biogenesis; peptidoglycan biosynthesis. Cell wall formation. The chain is D-alanine--D-alanine ligase from Anaplasma marginale (strain Florida).